The following is a 174-amino-acid chain: Inactive signal peptidase IA (174 aa).

Residues 1–7 (MKKVVKY) lie on the Cytoplasmic side of the membrane. Residues 8–28 (LISLILAIIIVLFVQTFVIVG) form a helical membrane-spanning segment. The Extracellular segment spans residues 29–174 (HVIPNNDMSP…FSKWTVQFKS (146 aa)).

This sequence belongs to the peptidase S26 family.

Its subcellular location is the cell membrane. Its function is as follows. Catalytically inactive. This Staphylococcus aureus (strain COL) protein is Inactive signal peptidase IA (spsA).